Here is a 1007-residue protein sequence, read N- to C-terminus: Ephrin type-A receptor 10 (1007 aa).

Positions 1–22 (METGAGPHPLRLFVCLIPLCLA) are cleaved as a signal peptide. Residues 23 to 565 (LLLGPGRPGT…APGSRDQSPA (543 aa)) lie on the Extracellular side of the membrane. Positions 35 to 216 (EVILLDSKAS…YYKQCRATVR (182 aa)) constitute an Eph LBD domain. Asparagine 311 carries N-linked (GlcNAc...) asparagine glycosylation. 2 disordered regions span residues 323 to 343 (ARSP…APRD) and 467 to 486 (PQSV…PGTN). 2 consecutive Fibronectin type-III domains span residues 340 to 452 (APRD…TGPG) and 456 to 554 (EEDE…TPGE). A glycan (N-linked (GlcNAc...) asparagine) is linked at asparagine 486. A helical membrane pass occupies residues 566–586 (VVVTVVTISALLVLGSVMSVL). Topologically, residues 587-1007 (AIWRRPCDGK…LQLQGQGVQV (421 aa)) are cytoplasmic. One can recognise a Protein kinase domain in the interval 644–899 (VTLEKSLGAG…PRFSQIHSIL (256 aa)). The SAM domain maps to 932–996 (PSFGSVGAWL…LSGISALQTR (65 aa)).

The protein belongs to the protein kinase superfamily. Tyr protein kinase family. Ephrin receptor subfamily. Expressed in the cochlea, in the organ of Corti, spiral ganglion, and stria vascularis.

The protein localises to the cell membrane. The enzyme catalyses L-tyrosyl-[protein] + ATP = O-phospho-L-tyrosyl-[protein] + ADP + H(+). In terms of biological role, receptor for members of the ephrin-A family. Binds to EFNA3, EFNA4 and EFNA5. The polypeptide is Ephrin type-A receptor 10 (Epha10) (Mus musculus (Mouse)).